The chain runs to 71 residues: uncharacterized protein (71 aa).

Positions 15-71 (PNFEYARRLNGKKVKIFLRNGEVLDAEVTGVSNYEIMVKVGDRNLLVFKHAIDYIEY) constitute a Sm domain.

This is an uncharacterized protein from Methanocaldococcus jannaschii (strain ATCC 43067 / DSM 2661 / JAL-1 / JCM 10045 / NBRC 100440) (Methanococcus jannaschii).